The primary structure comprises 258 residues: 5'-nucleotidase SurE (258 aa).

Residues aspartate 18, aspartate 19, serine 49, and asparagine 102 each contribute to the a divalent metal cation site.

This sequence belongs to the SurE nucleotidase family. A divalent metal cation is required as a cofactor.

Its subcellular location is the cytoplasm. It catalyses the reaction a ribonucleoside 5'-phosphate + H2O = a ribonucleoside + phosphate. Its function is as follows. Nucleotidase that shows phosphatase activity on nucleoside 5'-monophosphates. The sequence is that of 5'-nucleotidase SurE from Vibrio campbellii (strain ATCC BAA-1116).